Consider the following 422-residue polypeptide: Serine hydroxymethyltransferase (422 aa).

(6S)-5,6,7,8-tetrahydrofolate-binding positions include L121 and 125-127 (GHL). An N6-(pyridoxal phosphate)lysine modification is found at K230. 355-357 (SPF) is a binding site for (6S)-5,6,7,8-tetrahydrofolate.

It belongs to the SHMT family. Homodimer. The cofactor is pyridoxal 5'-phosphate.

It localises to the cytoplasm. The enzyme catalyses (6R)-5,10-methylene-5,6,7,8-tetrahydrofolate + glycine + H2O = (6S)-5,6,7,8-tetrahydrofolate + L-serine. It functions in the pathway one-carbon metabolism; tetrahydrofolate interconversion. It participates in amino-acid biosynthesis; glycine biosynthesis; glycine from L-serine: step 1/1. In terms of biological role, catalyzes the reversible interconversion of serine and glycine with tetrahydrofolate (THF) serving as the one-carbon carrier. This reaction serves as the major source of one-carbon groups required for the biosynthesis of purines, thymidylate, methionine, and other important biomolecules. Also exhibits THF-independent aldolase activity toward beta-hydroxyamino acids, producing glycine and aldehydes, via a retro-aldol mechanism. The chain is Serine hydroxymethyltransferase from Teredinibacter turnerae (strain ATCC 39867 / T7901).